The primary structure comprises 158 residues: Non-secretory ribonuclease (158 aa).

An N-terminal signal peptide occupies residues 1–27 (MVPKLFTSQICLLPLLGLLSAEGSPHA). His-42 (proton acceptor) is an active-site residue. 3'-nitrotyrosine is present on Tyr-60. 65-69 (KNKNT) contacts substrate. Residues Asn-86, Asn-92, and Asn-111 are each glycosylated (N-linked (GlcNAc...) asparagine). Catalysis depends on His-153, which acts as the Proton donor.

This sequence belongs to the pancreatic ribonuclease family. Interacts with and forms a tight 1:1 complex with RNH1. Dimerization of two such complexes may occur.

The protein resides in the lysosome. The protein localises to the cytoplasmic granule. The catalysed reaction is an [RNA] containing cytidine + H2O = an [RNA]-3'-cytidine-3'-phosphate + a 5'-hydroxy-ribonucleotide-3'-[RNA].. The enzyme catalyses an [RNA] containing uridine + H2O = an [RNA]-3'-uridine-3'-phosphate + a 5'-hydroxy-ribonucleotide-3'-[RNA].. This is a non-secretory ribonuclease. It is a pyrimidine specific nuclease with a slight preference for U. Cytotoxin and helminthotoxin. Possesses a wide variety of biological activities. This is Non-secretory ribonuclease (RNASE2) from Callithrix jacchus (White-tufted-ear marmoset).